We begin with the raw amino-acid sequence, 510 residues long: Cytochrome P450 11B2, mitochondrial (510 aa).

The N-terminal 34 residues, methionine 1–leucine 34, are a transit peptide targeting the mitochondrion. Phenylalanine 391 is a 21-hydroxyprogesterone binding site. Cysteine 457 lines the heme pocket.

It belongs to the cytochrome P450 family. Heme serves as cofactor. In terms of tissue distribution, adrenal cortex.

The protein resides in the mitochondrion inner membrane. It carries out the reaction a steroid + 2 reduced [adrenodoxin] + O2 + 2 H(+) = an 11beta-hydroxysteroid + 2 oxidized [adrenodoxin] + H2O. The catalysed reaction is 21-hydroxyprogesterone + 2 reduced [adrenodoxin] + O2 + 2 H(+) = corticosterone + 2 oxidized [adrenodoxin] + H2O. It catalyses the reaction corticosterone + 2 reduced [adrenodoxin] + O2 + 2 H(+) = 18-hydroxycorticosterone + 2 oxidized [adrenodoxin] + H2O. The enzyme catalyses 18-hydroxycorticosterone + 2 reduced [adrenodoxin] + O2 + 2 H(+) = aldosterone + 2 oxidized [adrenodoxin] + 2 H2O. It carries out the reaction 11-deoxycortisol + 2 reduced [adrenodoxin] + O2 + 2 H(+) = cortisol + 2 oxidized [adrenodoxin] + H2O. The catalysed reaction is cortisol + 2 reduced [adrenodoxin] + O2 + 2 H(+) = 18-hydroxycortisol + 2 oxidized [adrenodoxin] + H2O. It catalyses the reaction 21-hydroxyprogesterone + 2 reduced [adrenodoxin] + O2 + 2 H(+) = 18-hydroxy-11-deoxycorticosterone + 2 oxidized [adrenodoxin] + H2O. The enzyme catalyses 18-hydroxycortisol + 2 reduced [adrenodoxin] + O2 + 2 H(+) = 18-oxocortisol + 2 oxidized [adrenodoxin] + 2 H2O. The protein operates within steroid biosynthesis. In terms of biological role, a cytochrome P450 monooxygenase that catalyzes the biosynthesis of aldosterone, the main mineralocorticoid responsible for salt and water homeostasis. Catalyzes three sequential oxidative reactions of 11-deoxycorticosterone (21-hydroxyprogesterone), namely 11-beta hydroxylation, followed by two successive oxidations at C18 yielding 18-hydroxy and then 18-oxo intermediates (that do not leave the enzyme active site during the consecutive hydroxylation reactions), and end with the formation of aldosterone. Can also produce 18-hydroxycortisol and 18-oxocortisol, derived from successive oxidations of cortisol at C18, normally found at very low levels, but significantly increased in primary aldosteronism, the most common form of secondary hypertension. Mechanistically, uses molecular oxygen inserting one oxygen atom into a substrate and reducing the second into a water molecule. Two electrons are provided by NADPH via a two-protein mitochondrial transfer system comprising flavoprotein FDXR (adrenodoxin/ferredoxin reductase) and nonheme iron-sulfur protein FDX1 or FDX2 (adrenodoxin/ferredoxin). Could also be involved in the androgen metabolic pathway. The polypeptide is Cytochrome P450 11B2, mitochondrial (Cyp11b2) (Rattus norvegicus (Rat)).